Reading from the N-terminus, the 131-residue chain is Single-stranded DNA-binding protein 2 (131 aa).

Residues 1–103 form the SSB domain; that stretch reads MYNKVIMIGR…VLASSFQLLE (103 aa). The Important for interaction with partner proteins signature appears at 126–131; sequence EEELPF.

In terms of assembly, homotetramer.

Plays an important role in DNA replication, recombination and repair. Binds to ssDNA and to an array of partner proteins to recruit them to their sites of action during DNA metabolism. In Streptococcus agalactiae serotype III (strain NEM316), this protein is Single-stranded DNA-binding protein 2 (ssb2).